The primary structure comprises 441 residues: Cytochrome P450 monooxygenase cpsC (441 aa).

The segment at 175–195 (STTSQARKDETTATQQAGMEQ) is disordered. Positions 186 to 195 (TATQQAGMEQ) are enriched in polar residues. Cysteine 377 is a binding site for heme.

The protein belongs to the cytochrome P450 family. It depends on heme as a cofactor.

The catalysed reaction is campesine D + reduced [NADPH--hemoprotein reductase] + O2 = campesine G + oxidized [NADPH--hemoprotein reductase] + 2 H2O + H(+). It functions in the pathway alkaloid biosynthesis. Its function is as follows. Cytochrome P450 monooxygenase; part of the gene cluster that mediates the biosynthesis of campesine G, a dimeric indole piperazine alkaloid that shows good insecticidal activity Galleria mellonella. Within the pathway, cpsC catalyzes regioselective dehydrogenation reaction towards C2-N1 of the (2H)-indole ring of campesine D to yield the final product, campesine G. The non-canonical non-ribosomal peptide synthetase cpsA catalyzes the first steps of the pathway by producing L-tryptophanal and L-valinal from their respective amino-acids. These products condensate spontaneously to form trypyl-valyl pyrazine also known as didehydrocampesine A. The NmrA-like family domain-containing oxidoreductase cpsB is the next enzyme in cps pathway and reduces the unstable didehydrocampesine A to campesine A. The methyltransferase cpsF and the acetyltransferase cpsE both recognize N13 of piperazine ring to carry out methylation and acetylation of campesine A to produce campesine C and B, respectively. The cytochrome P450 monooxygenase cpsD then acts as a dimerase that catalyzes oxidative heterocoupling between campesine B and C to produce heterodimers with unexpected 6/5/6/6/6/6/5/6 eight-ring scaffold called campesine D. Finally,the cytochrome P450 monooxygenase cpsC is a regioselective dehydrogenase that catalyzes dehydrogenation reaction towards C2-N1 to produce campesine G. The chain is Cytochrome P450 monooxygenase cpsC from Aspergillus campestris (strain IBT 28561).